An 896-amino-acid chain; its full sequence is Phosphatidate phosphatase LPIN2 (896 aa).

Residues 1–108 are N-LIP; that stretch reads MNYVGQLAGQ…LPAYLATSPI (108 aa). A Phosphoserine modification is found at Ser106. Positions 120–208 are disordered; it reads TPLVKSGGDE…SSNASLKEEE (89 aa). Over residues 152–162 the composition is skewed to basic residues; the sequence is VKKKKRRRKKY. The Nuclear localization signal signature appears at 153-158; it reads KKKKRR. Ser174, Ser186, Ser187, Ser243, and Ser303 each carry phosphoserine. Disordered stretches follow at residues 370–405 and 420–459; these read AEAPSESKPAAKVDSPSKKKGVHKRSQHQGPDDIYL and FPKSESEPGSRQWPESDTLSGSQSPQSVGSAAADSGTECL. The segment covering 387–396 has biased composition (basic residues); that stretch reads KKKGVHKRSQ. Polar residues predominate over residues 426–448; that stretch reads EPGSRQWPESDTLSGSQSPQSVG. A Phosphoserine modification is found at Ser566. Positions 569–579 are enriched in basic and acidic residues; it reads KQLPESKEGKS. The segment at 569-636 is disordered; the sequence is KQLPESKEGK…LSHGSTTSYK (68 aa). The segment covering 604–617 has biased composition (acidic residues); sequence SSSDEGSQELEESI. A C-LIP region spans residues 635–837; that stretch reads YKKSLRLSSD…RIFTVNPKGE (203 aa). Residues 689 to 693 carry the DXDXT motif motif; the sequence is DIDGT. The LXXIL motif signature appears at 700–704; it reads LGQIL.

It belongs to the lipin family. Mg(2+) is required as a cofactor. In terms of tissue distribution, expressed in liver, lung, kidney, placenta, spleen, thymus, lymph node, prostate, testes, small intestine, and colon.

Its subcellular location is the nucleus. The protein localises to the cytoplasm. It is found in the cytosol. It localises to the endoplasmic reticulum membrane. The catalysed reaction is a 1,2-diacyl-sn-glycero-3-phosphate + H2O = a 1,2-diacyl-sn-glycerol + phosphate. Its activity is regulated as follows. Inhibited by N-ethylmaleimide. Functionally, acts as a magnesium-dependent phosphatidate phosphatase enzyme which catalyzes the conversion of phosphatidic acid to diacylglycerol during triglyceride, phosphatidylcholine and phosphatidylethanolamine biosynthesis in the endoplasmic reticulum membrane. Plays important roles in controlling the metabolism of fatty acids at different levels. Also acts as a nuclear transcriptional coactivator for PPARGC1A to modulate lipid metabolism. The polypeptide is Phosphatidate phosphatase LPIN2 (Homo sapiens (Human)).